A 778-amino-acid polypeptide reads, in one-letter code: MSGSHLRLRFLSLLLLCCVSSSTSSLFTFSYPVLDLVACRSHQIQAFTQFKNEFDTHRCNHSDHSNGVWCDNSTGVVTKLQLNACLSGTLNPNSSLFWFHQLRFLNLSHNNFTSTSFPSEFGNLNKVEVLDLSFNSFTGQVPSSFSNLSQLTELHLSNNQLTGGFPQVQNLTNLSHLDFENNKFSGTVPSSLLMMPFLSYLNLYGNHFTGSIEVSTSSKLEILYLGLKPFEGQILEPISKLINLKRLELSFLNISYPLDLNLFSSLKSLTYLDLSGNSISPRSLRSDLYIPLTLEKLLLEQCGIIEFPNILKTLQKLEYIDMSNNRINGKIPEWLWRLPRLRSMSLANNSFNGFEGSTDVLVNSSMEILFMHSNNIQGALPNLPLSIKAFSAGYNNFSGEIPLSICNRSSLAALSLPYNNFTGKIPQCLSNLTFVHLRKNNLEGSIPDTLCAGDSLQTLDIGFNLISGTLPRSLLNCSSLEFLSVDNNRIKDTFPFWLKALPNLQVLILSSNKLYGPIAPPHQSPLAFPELRIFEIADNMFTGTLSPRYFVNWKTSSLTVNEDGDLYMVYKNNAFGIDSYVYRDTIDMKYKGLSMEQQMVLNSYSAIDFSGNRLEGQIPKSIGLLKELIALNLSNNAFTCHIPLSLANATELESLDLSRNQLSGTIPNGLKTLSFLAYINVSHNKLKGTQIIGQHKSSFEGNAGLCGLPLEETCSGKNAPPTQQPKEEDEEQEQVLNWKAVATGYGTGLLLGLAIAQVIASYKPDWLVKIIGLFRFCF.

An N-terminal signal peptide occupies residues methionine 1–serine 24. Residues serine 25–lysine 739 are Extracellular-facing. N-linked (GlcNAc...) asparagine glycosylation is found at asparagine 60, asparagine 72, asparagine 93, asparagine 106, asparagine 111, asparagine 147, asparagine 170, and asparagine 173. LRR repeat units follow at residues phenylalanine 99 to asparagine 123, asparagine 125 to asparagine 147, leucine 148 to leucine 171, threonine 172 to methionine 195, and phenylalanine 197 to lysine 219. An LRR 6; degenerate repeat occupies leucine 220 to lysine 240. LRR repeat units lie at residues leucine 241 to serine 265, leucine 266 to proline 291, threonine 293 to threonine 313, leucine 314 to leucine 338, arginine 340 to asparagine 363, and serine 364 to isoleucine 387. The N-linked (GlcNAc...) asparagine glycan is linked to asparagine 253. Asparagine 348 and asparagine 363 each carry an N-linked (GlcNAc...) asparagine glycan. The stretch at lysine 388–asparagine 407 is one LRR 13; degenerate repeat. Asparagine 396, asparagine 407, asparagine 420, asparagine 431, and asparagine 476 each carry an N-linked (GlcNAc...) asparagine glycan. LRR repeat units lie at residues arginine 408–leucine 429, serine 430–glycine 453, serine 455–cysteine 477, serine 479–alanine 500, leucine 501–proline 525, phenylalanine 528–asparagine 552, leucine 601–leucine 625, lysine 626–alanine 649, threonine 650–leucine 673, and tyrosine 678–glutamate 700. Asparagine 632 and asparagine 648 each carry an N-linked (GlcNAc...) asparagine glycan. A glycan (N-linked (GlcNAc...) asparagine) is linked at asparagine 680. Residues alanine 740–alanine 760 traverse the membrane as a helical segment. Over serine 761–phenylalanine 778 the chain is Cytoplasmic.

This sequence belongs to the RLP family.

It is found in the cell membrane. The protein is Receptor like protein 28 of Arabidopsis thaliana (Mouse-ear cress).